The sequence spans 301 residues: 33 kDa chaperonin (301 aa).

Cystine bridges form between cysteine 239/cysteine 241 and cysteine 272/cysteine 275.

This sequence belongs to the HSP33 family. In terms of processing, under oxidizing conditions two disulfide bonds are formed involving the reactive cysteines. Under reducing conditions zinc is bound to the reactive cysteines and the protein is inactive.

Its subcellular location is the cytoplasm. Its function is as follows. Redox regulated molecular chaperone. Protects both thermally unfolding and oxidatively damaged proteins from irreversible aggregation. Plays an important role in the bacterial defense system toward oxidative stress. The chain is 33 kDa chaperonin from Nostoc punctiforme (strain ATCC 29133 / PCC 73102).